The sequence spans 467 residues: Glutamyl-tRNA(Gln) amidotransferase subunit A (467 aa).

Residues lysine 57 and serine 132 each act as charge relay system in the active site. Residue serine 156 is the Acyl-ester intermediate of the active site.

This sequence belongs to the amidase family. GatA subfamily. Heterotrimer of A, B and C subunits.

It catalyses the reaction L-glutamyl-tRNA(Gln) + L-glutamine + ATP + H2O = L-glutaminyl-tRNA(Gln) + L-glutamate + ADP + phosphate + H(+). Functionally, allows the formation of correctly charged Gln-tRNA(Gln) through the transamidation of misacylated Glu-tRNA(Gln) in organisms which lack glutaminyl-tRNA synthetase. The reaction takes place in the presence of glutamine and ATP through an activated gamma-phospho-Glu-tRNA(Gln). The polypeptide is Glutamyl-tRNA(Gln) amidotransferase subunit A (Pseudothermotoga lettingae (strain ATCC BAA-301 / DSM 14385 / NBRC 107922 / TMO) (Thermotoga lettingae)).